The chain runs to 513 residues: 2-isopropylmalate synthase (513 aa).

The Pyruvate carboxyltransferase domain occupies 4-268 (IKIFDTTLRD…ETGIRTELIY (265 aa)). 4 residues coordinate Mn(2+): aspartate 13, histidine 203, histidine 205, and asparagine 239. The interval 392-513 (RLVHFHVHTG…GLLRKNGGVE (122 aa)) is regulatory domain.

Belongs to the alpha-IPM synthase/homocitrate synthase family. LeuA type 1 subfamily. In terms of assembly, homodimer. It depends on Mn(2+) as a cofactor.

Its subcellular location is the cytoplasm. The enzyme catalyses 3-methyl-2-oxobutanoate + acetyl-CoA + H2O = (2S)-2-isopropylmalate + CoA + H(+). It functions in the pathway amino-acid biosynthesis; L-leucine biosynthesis; L-leucine from 3-methyl-2-oxobutanoate: step 1/4. Its function is as follows. Catalyzes the condensation of the acetyl group of acetyl-CoA with 3-methyl-2-oxobutanoate (2-ketoisovalerate) to form 3-carboxy-3-hydroxy-4-methylpentanoate (2-isopropylmalate). The protein is 2-isopropylmalate synthase of Thermotoga neapolitana (strain ATCC 49049 / DSM 4359 / NBRC 107923 / NS-E).